The sequence spans 558 residues: MGFKSDIEIAQEAKPQDIREVAKKLGLGEDDVELYGKYKAKVDYNLLKRETGKKAKLILTTAINPTPAGEGKTTTTIGVADAFAKLDKNVLVALREPSLGPVFGVKGGAAGGGYAQVVPMEDINLHFTGDFHAIGAANNLLAAMLDNHIHQGNALRIDPKKITWRRCVDMNDRQLRNIVDGMGKKGDGAVRQDGFDITVASEIMAAFCLASDISDLKERLGNIIVGYSYEGEPVTARQLKANGAMAALLKDALKPNLVQTLEGTPSFVHGGPFANIAHGCNSVIATRMAMHFADYVITEAGFGADLGAEKFLDIKCRMANLKPDAVIIVATVRALKYNGGVAKADLNNENLEALEKGLPNLLKHVENITQVYGLPAVVAINRFPLDTEAELKLVEDKCKELGVNVALSEVWAKGGEGGIAVAKEVLRLLDEEENNFRFCYEDDLSIKDKINAIATKIYGADGVDYTPEADKEIANLEKLGFTKVPVCMAKTQYSLTDDQTKLGRPTGFRITVRQATISAGAGFIVALTGEIMKMPGLPKVPAAEKIDVDENGVIAGLF.

Thr-66–Thr-73 provides a ligand contact to ATP.

The protein belongs to the formate--tetrahydrofolate ligase family.

The enzyme catalyses (6S)-5,6,7,8-tetrahydrofolate + formate + ATP = (6R)-10-formyltetrahydrofolate + ADP + phosphate. Its pathway is one-carbon metabolism; tetrahydrofolate interconversion. This is Formate--tetrahydrofolate ligase from Clostridioides difficile (strain 630) (Peptoclostridium difficile).